The primary structure comprises 129 residues: Follitropin subunit beta (129 aa).

A signal peptide spans 1-19 (MKSVQFCFLFCCWRAICCR). 6 disulfide bridges follow: C21-C69, C35-C84, C38-C122, C46-C100, C50-C102, and C105-C112. 2 N-linked (GlcNAc...) asparagine glycosylation sites follow: N25 and N42.

It belongs to the glycoprotein hormones subunit beta family. In terms of assembly, heterodimer. The active follitropin is a heterodimer composed of an alpha chain/CGA shared with other hormones and a unique beta chain/FSHB shown here.

It localises to the secreted. In terms of biological role, together with the alpha chain CGA constitutes follitropin, the follicle-stimulating hormone, and provides its biological specificity to the hormone heterodimer. Binds FSHR, a G protein-coupled receptor, on target cells to activate downstream signaling pathways. Follitropin is involved in follicle development and spermatogenesis in reproductive organs. The sequence is that of Follitropin subunit beta (FSHB) from Ovis aries (Sheep).